Here is a 153-residue protein sequence, read N- to C-terminus: UPF0756 membrane protein BA_4840/GBAA_4840/BAS4489 (153 aa).

4 helical membrane passes run 8 to 28 (FLFI…TVAI), 54 to 74 (LGVT…EIGF), 87 to 107 (WIAL…VQLL), and 117 to 137 (LVFG…GPLI).

Belongs to the UPF0756 family.

The protein resides in the cell membrane. This is UPF0756 membrane protein BA_4840/GBAA_4840/BAS4489 from Bacillus anthracis.